Reading from the N-terminus, the 349-residue chain is tRNA pseudouridine synthase D (349 aa).

Position 27 (Phe-27) interacts with substrate. The active-site Nucleophile is Asp-80. Residue Asn-129 coordinates substrate. One can recognise a TRUD domain in the interval 155 to 303 (GVPNYFGAQR…VEAARRAMLL (149 aa)). Phe-329 is a substrate binding site.

The protein belongs to the pseudouridine synthase TruD family.

The catalysed reaction is uridine(13) in tRNA = pseudouridine(13) in tRNA. Functionally, responsible for synthesis of pseudouridine from uracil-13 in transfer RNAs. The protein is tRNA pseudouridine synthase D of Enterobacter sp. (strain 638).